The following is a 688-amino-acid chain: Sialic acid-binding Ig-like lectin 10 (688 aa).

Positions 1-17 (MSLLLFLLSFLLDGPQG) are cleaved as a signal peptide. Topologically, residues 18–543 (QMESYFLQVQ…DKDSATAFSK (526 aa)) are extracellular. Positions 26–138 (VQRIVKAQEG…SFKEEFRLQV (113 aa)) constitute an Ig-like V-type domain. 3 disulfides stabilise this stretch: Cys37-Cys172, Cys42-Cys102, and Cys163-Cys214. Arg120 provides a ligand contact to N-acetylneuraminate. The Ig-like C2-type 1 domain maps to 145-228 (PDIFIPEVLE…SRMSTQRTVR (84 aa)). Residues Asn195 and Asn246 are each glycosylated (N-linked (GlcNAc...) asparagine). Ig-like C2-type domains lie at 250-334 (PDLH…LDLS) and 339-436 (PQDL…LSLS). 2 cysteine pairs are disulfide-bonded: Cys271-Cys318 and Cys375-Cys420. A helical membrane pass occupies residues 544-564 (GAVLGFGITALLALCLIVVIV). Residues 565–688 (KTLQKKGTQE…YSDYTEVRVH (124 aa)) lie on the Cytoplasmic side of the membrane. Residues 588 to 593 (LDYINV) carry the ITIM motif 1 motif. The disordered stretch occupies residues 602–656 (RNWKAEPDAPSRSSPLDTHFPKPKKKQKDPHFTYPGCPDPTSSSQVPVSENNPEE). Residues 641–652 (PTSSSQVPVSEN) show a composition bias toward polar residues. Residues 657–662 (LHYAAL) carry the ITIM motif 2 motif. A Phosphotyrosine modification is found at Tyr659.

The protein belongs to the immunoglobulin superfamily. SIGLEC (sialic acid binding Ig-like lectin) family. Interacts with PTPN6/SHP-1 upon phosphorylation. Interacts with NCF1. Interacts with CD24; the probable CD24:SIGLEC10 complex is proposed to inhibit HGMB1-mediated tissue damage immune response. Interacts with HMGB1; the interaction is dependent on CD24. Associates with membrane IgM on the B cell surface. Interacts with RIGI, CBL and PTPN11. Phosphorylation of Tyr-659 is involved in binding to PTPN6. As to expression, expressed in B cells with high levels in pre-B cells and B1a cells of the peritoneal cavity.

The protein resides in the cell membrane. Putative adhesion molecule that mediates sialic-acid dependent binding to cells. Preferentially binds to alpha-2,3- or alpha-2,6-linked sialic acid. The sialic acid recognition site may be masked by cis interactions with sialic acids on the same cell surface. In the immune response, seems to act as an inhibitory receptor upon ligand induced tyrosine phosphorylation by recruiting cytoplasmic phosphatase(s) via their SH2 domain(s) that block signal transduction through dephosphorylation of signaling molecules. Involved in negative regulation of B-cell antigen receptor signaling and specifically acts on B1 cells to inhibit Ca(2+) signaling, cellular expansion and antibody secretion. The inhibition of B cell activation is dependent on PTPN6/SHP-1. In association with CD24 may be involved in the selective suppression of the immune response to danger-associated molecular patterns (DAMPs) such as HMGB1, HSP70 and HSP90. In association with CD24 may regulate the immune repsonse of natural killer (NK) cells. Plays a role in the control of autoimmunity. During initiation of adaptive immune responses by CD8-alpha(+) dendritic cells inhibits cross-presentation by impairing the formation of MHC class I-peptide complexes. The function seems to implicate recruitment of PTPN6/SHP-1, which dephosphorylates NCF1 of the NADPH oxidase complex consequently promoting phagosomal acidification. Its function is as follows. (Microbial infection) During infection by RNA viruses inhibits RIG-I signaling in macrophages by promoting its CBL-dependent ubiquitination and degradation via PTPN11/SHP-2. The sequence is that of Sialic acid-binding Ig-like lectin 10 (Siglec10) from Mus musculus (Mouse).